The chain runs to 317 residues: tRNA-cytidine(32) 2-sulfurtransferase (317 aa).

Residues 63-68 (SGGKDS) carry the PP-loop motif motif. Residues C138, C141, and C229 each contribute to the [4Fe-4S] cluster site.

Belongs to the TtcA family. As to quaternary structure, homodimer. Mg(2+) is required as a cofactor. It depends on [4Fe-4S] cluster as a cofactor.

It localises to the cytoplasm. It carries out the reaction cytidine(32) in tRNA + S-sulfanyl-L-cysteinyl-[cysteine desulfurase] + AH2 + ATP = 2-thiocytidine(32) in tRNA + L-cysteinyl-[cysteine desulfurase] + A + AMP + diphosphate + H(+). It functions in the pathway tRNA modification. Catalyzes the ATP-dependent 2-thiolation of cytidine in position 32 of tRNA, to form 2-thiocytidine (s(2)C32). The sulfur atoms are provided by the cysteine/cysteine desulfurase (IscS) system. This chain is tRNA-cytidine(32) 2-sulfurtransferase, found in Janthinobacterium sp. (strain Marseille) (Minibacterium massiliensis).